A 508-amino-acid chain; its full sequence is MEILNNKTLPELAWLLLGPLVLFYVFKLFIYNVYFHPLRKFPGPWINKISIIPHLYTVFQGKQSYELLKLHRKYGHIVRYGPNELSFSSARAWKDIYGSRPGHQTFVKGTWYDGLSIFAAQDVRSIITERDPTKHAAIARVFGGAFSRSFLNEMEPMINDYIDRFIEHVKTKTANGGVVDLTFGYSSMTFDIIGDLAFGQDFGAIGRETTHPFILELNESLTFTSFHEAIQQFPALGPIARFFFREKVNKLEETARKGGEFALQVMRKRVAEQDTTSRKDFLTKVLEQRASSKVQMSEIQLAAQSWDFIGAGTETTASVMTSTTYYLLRDKKLLAELTAEIRAAFPNADAITNASTEKLELLHRVCLEGLRLPTGAPPILPRLVPKGGDTVDGHFIPGGTPVTIAPMVAALDPLNFKDPLEFKPERWLGKSGDILEASQPFSYGTRGCAGKAIALMEVRVTIAKMLYTFDMELENPDLDWTGNDFNNLLQFGLWVRPLLNVRARLATK.

Residues 11-31 (ELAWLLLGPLVLFYVFKLFIY) form a helical membrane-spanning segment. C448 is a binding site for heme.

The protein belongs to the cytochrome P450 family. Requires heme as cofactor.

Its subcellular location is the membrane. Its pathway is sesquiterpene biosynthesis. Its function is as follows. Cytochrome P450 monooxygenase; part of the minimal biosynthetic bip cluster that mediates the biosynthesis of bridged polycyclic sesquiterpenoids derived from sativene, isosativene, and longifolene. The sesquiterpene cyclase BipA acts as a versatile cyclase that converts farnesyl diphosphate (FPP) into (-)-sativene as the dominant product and (-)-isosativene and (-)-longifolene as minor ones. The cytochrome P450 monooxygenase BipB then hydroxylates different enantiomeric sesquiterpenes, such as (-)-longifolene and (+)-longifolene, at C-15 and C-14. The C-15- or both C-15- and C-14-hydroxylated products are further oxidized by unclustered oxidases, resulting in a structurally diverse array of sesquiterpenoids. The BipB-catalyzed hydroxylation at C-15 serves as an initiator for the oxidation by the unclustered oxidases. This is Cytochrome P450 monooxygenase BipB from Cochliobolus sativus (Common root rot and spot blotch fungus).